Reading from the N-terminus, the 362-residue chain is Dihydroorotate dehydrogenase (quinone) (362 aa).

Residues 60–64 and T84 contribute to the FMN site; that span reads AGFDK. K64 provides a ligand contact to substrate. Position 109-113 (109-113) interacts with substrate; it reads NRMGF. The FMN site is built by N137 and N168. N168 contributes to the substrate binding site. The active-site Nucleophile is the S171. Residue N173 coordinates substrate. FMN is bound by residues K213 and S241. 242-243 is a substrate binding site; it reads NT. Residues G264, G293, and 314–315 each bind FMN; that span reads YS.

This sequence belongs to the dihydroorotate dehydrogenase family. Type 2 subfamily. Monomer. FMN is required as a cofactor.

Its subcellular location is the cell membrane. The enzyme catalyses (S)-dihydroorotate + a quinone = orotate + a quinol. It functions in the pathway pyrimidine metabolism; UMP biosynthesis via de novo pathway; orotate from (S)-dihydroorotate (quinone route): step 1/1. Functionally, catalyzes the conversion of dihydroorotate to orotate with quinone as electron acceptor. In Bartonella henselae (strain ATCC 49882 / DSM 28221 / CCUG 30454 / Houston 1) (Rochalimaea henselae), this protein is Dihydroorotate dehydrogenase (quinone).